The following is a 354-amino-acid chain: Uroporphyrinogen decarboxylase (354 aa).

Residues 27–31 (RQAGR), Asp-77, Tyr-154, Thr-209, and His-327 contribute to the substrate site.

This sequence belongs to the uroporphyrinogen decarboxylase family. In terms of assembly, homodimer.

It is found in the cytoplasm. The enzyme catalyses uroporphyrinogen III + 4 H(+) = coproporphyrinogen III + 4 CO2. Its pathway is porphyrin-containing compound metabolism; protoporphyrin-IX biosynthesis; coproporphyrinogen-III from 5-aminolevulinate: step 4/4. Catalyzes the decarboxylation of four acetate groups of uroporphyrinogen-III to yield coproporphyrinogen-III. The polypeptide is Uroporphyrinogen decarboxylase (Escherichia coli O6:K15:H31 (strain 536 / UPEC)).